Here is a 241-residue protein sequence, read N- to C-terminus: Accessory protein p30II (241 aa).

2 short sequence motifs (nuclear localization signal) span residues R73–R78 and G91–R98. Composition is skewed to low complexity over residues C79–S100 and P107–S136. The disordered stretch occupies residues C79 to T151. Positions L175 to R184 match the Mitochondrial targeting signal motif.

This sequence belongs to the HTLV-1 accessory protein p30II family. As to quaternary structure, p30II binds to the KIX domains of CREBBP and EP300.

It localises to the host nucleus. Its subcellular location is the host nucleolus. The protein localises to the host mitochondrion inner membrane. P30II is a multifunctional regulator that sequesters EP300/CREBBP and down-regulates CREB-responsive element (CRE) and Tax-responsive element (TRE) mediated transcription. Specifically binds and represses tax/rex mRNA nuclear export. Since Tax and Rex are positive regulators of viral gene expression, their inhibition by p30II reduces virion production, and allows the virus to escape the host immune surveillance and persist latently in an immune-competent host. Its function is as follows. p13II increases mitochondrial permeability to monovalent cations, producing a rapid, membrane potential-dependent influx of potassium. This could involve a channel-forming activity. Interferes with cell proliferation and transformation and promotes apoptosis induced by ceramide and Fas ligand, probably using the Ras signaling. This is Accessory protein p30II from Human T-cell leukemia virus 1 (strain Japan ATK-1 subtype A) (HTLV-1).